The sequence spans 59 residues: UPF0434 protein Rsph17025_2896 (59 aa).

The protein belongs to the UPF0434 family.

In Cereibacter sphaeroides (strain ATCC 17025 / ATH 2.4.3) (Rhodobacter sphaeroides), this protein is UPF0434 protein Rsph17025_2896.